Here is a 548-residue protein sequence, read N- to C-terminus: Chaperonin GroEL (548 aa).

Residues 30 to 33 (TLGP), K51, 87 to 91 (DGTTT), G415, 479 to 481 (NAA), and D495 each bind ATP.

The protein belongs to the chaperonin (HSP60) family. As to quaternary structure, forms a cylinder of 14 subunits composed of two heptameric rings stacked back-to-back. Interacts with the co-chaperonin GroES.

It localises to the cytoplasm. It catalyses the reaction ATP + H2O + a folded polypeptide = ADP + phosphate + an unfolded polypeptide.. In terms of biological role, together with its co-chaperonin GroES, plays an essential role in assisting protein folding. The GroEL-GroES system forms a nano-cage that allows encapsulation of the non-native substrate proteins and provides a physical environment optimized to promote and accelerate protein folding. This Klebsiella pneumoniae (strain 342) protein is Chaperonin GroEL.